The primary structure comprises 415 residues: Zinc finger protein ZFMSA12A (415 aa).

The tract at residues 1-36 (MGIQDARWPSEDEETHLLDSSSAEQTRGEKCSDSTP) is disordered. C2H2-type zinc fingers lie at residues 78–100 (HKCT…QRLH), 106–129 (YRCS…RTQC), 134–156 (YICI…QCVH), 161–183 (FDCS…ELTH), 189–211 (FTCR…QKIH), 217–239 (NQCM…EVRH), 245–267 (QICA…MRSH), 273–295 (FQCT…VRTH), 301–323 (YLCS…RRTH), 329–351 (YKCS…MRVH), 357–379 (YVCS…SMNH), and 385–407 (YACQ…LKTH).

The protein resides in the nucleus. In Micropterus salmoides (Largemouth bass), this protein is Zinc finger protein ZFMSA12A.